Consider the following 349-residue polypeptide: D-alanine--D-alanine ligase (349 aa).

In terms of domain architecture, ATP-grasp spans 132-335 (KHVFEAVGVP…YSDLIEKLVD (204 aa)). An ATP-binding site is contributed by 162-217 (VEKLEFPVFVKPANMGSSVGISKVDDLADLQPALSEAYKYDNRVVIEQGVDAREIE). Residues D289, E302, and N304 each coordinate Mg(2+).

The protein belongs to the D-alanine--D-alanine ligase family. It depends on Mg(2+) as a cofactor. Requires Mn(2+) as cofactor.

Its subcellular location is the cytoplasm. It catalyses the reaction 2 D-alanine + ATP = D-alanyl-D-alanine + ADP + phosphate + H(+). It participates in cell wall biogenesis; peptidoglycan biosynthesis. In terms of biological role, cell wall formation. The chain is D-alanine--D-alanine ligase from Lactococcus lactis subsp. cremoris (strain SK11).